A 131-amino-acid chain; its full sequence is Histone H2B.2 (131 aa).

A compositionally biased stretch (basic and acidic residues) spans 1-19 (MSSAAEKKPASKAPAEKKP). A disordered region spans residues 1–37 (MSSAAEKKPASKAPAEKKPAAKKTSTSVDGKKRSKVR). N6-acetyllysine; alternate occurs at positions 7 and 8. Residues K7 and K8 each participate in a glycyl lysine isopeptide (Lys-Gly) (interchain with G-Cter in SUMO); alternate cross-link. S11 bears the Phosphoserine mark. K12 is subject to N6-acetyllysine. N6-acetyllysine; alternate occurs at positions 17, 18, 22, and 23. Residues K17 and K18 each participate in a glycyl lysine isopeptide (Lys-Gly) (interchain with G-Cter in SUMO); alternate cross-link. K22 carries the N6-butyryllysine; alternate modification. K23 is modified (N6-methyllysine; alternate). K35 carries the post-translational modification N6-succinyllysine. An N6,N6-dimethyllysine modification is found at K38. K47 carries the post-translational modification N6-succinyllysine. K124 is covalently cross-linked (Glycyl lysine isopeptide (Lys-Gly) (interchain with G-Cter in ubiquitin)).

The protein belongs to the histone H2B family. As to quaternary structure, the nucleosome is a histone octamer containing two molecules each of H2A, H2B, H3 and H4 assembled in one H3-H4 heterotetramer and two H2A-H2B heterodimers. The octamer wraps approximately 147 bp of DNA. Interacts with NAP1. Post-translationally, monoubiquitinated by the RAD6/UBC2-BRE1 complex to form H2BK123ub1. H2BK123ub1 gives a specific tag for epigenetic transcriptional activation and is also prerequisite for H3K4me and H3K79me formation. H2BK123ub1 also modulates the formation of double-strand breaks during meiosis and is a prerequisite for DNA-damage checkpoint activation. Deubiquitination is performed by UBP8 in presence of SGF11. Phosphorylated by STE20 to form H2BS10ph during progression through meiotic prophase. May be correlated with chromosome condensation. H2BS10ph is also formed after H(2)O(2) treatment, and is a step leading to apoptosis. In terms of processing, acetylated by GCN5, a component of the SAGA complex, to form H2BK11ac and H2BK16ac. H2BK16ac can also be formed by ESA1, a component of the NuA4 histone acetyltransferase (HAT) complex. Acetylation of N-terminal lysines and particularly formation of H2BK11acK16ac has a positive effect on transcription. Post-translationally, sumoylation to form H2BK6su or H2BK7su, and probably also H2BK16su or H2BK17su, occurs preferentially near the telomeres and represses gene transcription.

The protein localises to the nucleus. The protein resides in the chromosome. In terms of biological role, core component of nucleosome. Nucleosomes wrap and compact DNA into chromatin, limiting DNA accessibility to the cellular machineries which require DNA as a template. Histones thereby play a central role in transcription regulation, DNA repair, DNA replication and chromosomal stability. DNA accessibility is regulated via a complex set of post-translational modifications of histones, also called histone code, and nucleosome remodeling. In Saccharomyces cerevisiae (strain ATCC 204508 / S288c) (Baker's yeast), this protein is Histone H2B.2 (HTB2).